We begin with the raw amino-acid sequence, 335 residues long: Probable cytosolic iron-sulfur protein assembly protein Ciao1 (335 aa).

WD repeat units lie at residues 12 to 51 (GHKG…WSTK), 57 to 96 (GHKR…FECN), 101 to 140 (GHEN…EFEC), 146 to 185 (SHTQ…NDWD), 192 to 231 (SHTS…NSAG), 250 to 289 (QHSR…KPDE), and 301 to 335 (AHDQ…KVTE).

The protein belongs to the WD repeat CIA1 family.

Essential component of the cytosolic iron-sulfur (Fe/S) protein assembly machinery. Required for the maturation of extramitochondrial Fe/S proteins. This chain is Probable cytosolic iron-sulfur protein assembly protein Ciao1, found in Drosophila erecta (Fruit fly).